A 277-amino-acid chain; its full sequence is MATYAIGDIQGCYHSLLSLLELIQFDPVKDKLWLVGDLINRGPGSLETLRWAKSHESSLVMVLGNHDLHALAVAEGYVRAHRSDTLQSIFDAPDRDELLEWLRFRPMMHAEDGMVLVHAGLLPQWSAEQALHLGQEVERALRGDDYHGFLAHMYGNYPVRWEAGLQGMDRLRMITNAMTRLRVCTPDGAMDFDFKGKLADIPPGKMPWFDVPERGSADVTVIFGHWSALGLQQRDNLYALDTGCLWGGKLTALRLEGRQIFQVPCHPADGVRAINGS.

It belongs to the Ap4A hydrolase family.

It carries out the reaction P(1),P(4)-bis(5'-adenosyl) tetraphosphate + H2O = 2 ADP + 2 H(+). Its function is as follows. Hydrolyzes diadenosine 5',5'''-P1,P4-tetraphosphate to yield ADP. In Methylobacillus flagellatus (strain ATCC 51484 / DSM 6875 / VKM B-1610 / KT), this protein is Bis(5'-nucleosyl)-tetraphosphatase, symmetrical.